A 218-amino-acid polypeptide reads, in one-letter code: Phosphoglycolate phosphatase (218 aa).

The Nucleophile role is filled by aspartate 7. Aspartate 7, aspartate 9, and aspartate 167 together coordinate Mg(2+).

This sequence belongs to the HAD-like hydrolase superfamily. CbbY/CbbZ/Gph/YieH family. Requires Mg(2+) as cofactor.

The enzyme catalyses 2-phosphoglycolate + H2O = glycolate + phosphate. It functions in the pathway organic acid metabolism; glycolate biosynthesis; glycolate from 2-phosphoglycolate: step 1/1. In terms of biological role, specifically catalyzes the dephosphorylation of 2-phosphoglycolate. Is involved in the dissimilation of the intracellular 2-phosphoglycolate formed during the DNA repair of 3'-phosphoglycolate ends, a major class of DNA lesions induced by oxidative stress. This chain is Phosphoglycolate phosphatase, found in Cereibacter sphaeroides (strain ATCC 17025 / ATH 2.4.3) (Rhodobacter sphaeroides).